The following is a 277-amino-acid chain: Large ribosomal subunit protein uL2 (277 aa).

The interval Pro-218–Lys-277 is disordered. Basic and acidic residues predominate over residues Ala-264–Lys-277.

Belongs to the universal ribosomal protein uL2 family. As to quaternary structure, part of the 50S ribosomal subunit. Forms a bridge to the 30S subunit in the 70S ribosome.

Functionally, one of the primary rRNA binding proteins. Required for association of the 30S and 50S subunits to form the 70S ribosome, for tRNA binding and peptide bond formation. It has been suggested to have peptidyltransferase activity; this is somewhat controversial. Makes several contacts with the 16S rRNA in the 70S ribosome. The chain is Large ribosomal subunit protein uL2 from Streptococcus pyogenes serotype M4 (strain MGAS10750).